The sequence spans 502 residues: Probable glycine dehydrogenase (decarboxylating) subunit 2 (502 aa).

Lys273 is subject to N6-(pyridoxal phosphate)lysine.

The protein belongs to the GcvP family. C-terminal subunit subfamily. As to quaternary structure, the glycine cleavage system is composed of four proteins: P, T, L and H. In this organism, the P 'protein' is a heterodimer of two subunits. The cofactor is pyridoxal 5'-phosphate.

It carries out the reaction N(6)-[(R)-lipoyl]-L-lysyl-[glycine-cleavage complex H protein] + glycine + H(+) = N(6)-[(R)-S(8)-aminomethyldihydrolipoyl]-L-lysyl-[glycine-cleavage complex H protein] + CO2. In terms of biological role, the glycine cleavage system catalyzes the degradation of glycine. The P protein binds the alpha-amino group of glycine through its pyridoxal phosphate cofactor; CO(2) is released and the remaining methylamine moiety is then transferred to the lipoamide cofactor of the H protein. This Pyrococcus horikoshii (strain ATCC 700860 / DSM 12428 / JCM 9974 / NBRC 100139 / OT-3) protein is Probable glycine dehydrogenase (decarboxylating) subunit 2.